The sequence spans 79 residues: uncharacterized protein (79 aa).

This is an uncharacterized protein from Sulfolobus islandicus filamentous virus (isolate Iceland/Hveragerdi) (SIFV).